The sequence spans 136 residues: Large ribosomal subunit protein uL16 (136 aa).

It belongs to the universal ribosomal protein uL16 family. In terms of assembly, part of the 50S ribosomal subunit.

Functionally, binds 23S rRNA and is also seen to make contacts with the A and possibly P site tRNAs. This chain is Large ribosomal subunit protein uL16, found in Aggregatibacter actinomycetemcomitans (Actinobacillus actinomycetemcomitans).